Consider the following 343-residue polypeptide: MRN complex-interacting protein (343 aa).

The disordered stretch occupies residues 75-104 (EETVSASEEENVGHQQAGNVKQQEKSQPSE). Residues 87-104 (GHQQAGNVKQQEKSQPSE) are compositionally biased toward polar residues. 2 positions are modified to phosphoserine: S100 and S115. Disordered regions lie at residues 128–178 (SKQP…WGPQ), 193–212 (SPCLQENSADCSAGELRGPG), and 230–324 (AQFV…AQNP). The Nuclear localization signal (NLS) motif lies at 148–151 (RKRK). Polar residues predominate over residues 193–202 (SPCLQENSAD). The segment at 213–237 (KELWSPIQQVTATSSKWAQFVLPPR) is necessary for the association with the MRN complex. Over residues 240–255 (SHVDSEQPRSLQRDPR) the composition is skewed to basic and acidic residues.

Belongs to the MRNIP family. Associates with the MRE11-RAD50-NBN (MRN) damage-sensing complex; this association is constitutive. Interacts with MRE11. Interacts with NBN. Interacts with RAD50. Phosphorylated; phosphorylation is constitutive and occurs in the absence of any DNA-damaging stimulus. Phosphorylation on Ser-115 is necessary for its nuclear retention.

It is found in the nucleus. The protein resides in the nucleoplasm. Plays a role in the cellular response to DNA damage and the maintenance of genome stability through its association with the MRN damage-sensing complex. Promotes chromatin loading and activity of the MRN complex to facilitate subsequent ATM-mediated DNA damage response signaling and DNA repair. This is MRN complex-interacting protein from Homo sapiens (Human).